A 571-amino-acid polypeptide reads, in one-letter code: Sulfite reductase [NADPH] hemoprotein beta-component (571 aa).

[4Fe-4S] cluster-binding residues include Cys-436, Cys-442, Cys-481, and Cys-485. Cys-485 lines the siroheme pocket.

It belongs to the nitrite and sulfite reductase 4Fe-4S domain family. As to quaternary structure, alpha(8)-beta(8). The alpha component is a flavoprotein, the beta component is a hemoprotein. It depends on siroheme as a cofactor. Requires [4Fe-4S] cluster as cofactor.

The enzyme catalyses hydrogen sulfide + 3 NADP(+) + 3 H2O = sulfite + 3 NADPH + 4 H(+). Its pathway is sulfur metabolism; hydrogen sulfide biosynthesis; hydrogen sulfide from sulfite (NADPH route): step 1/1. Functionally, component of the sulfite reductase complex that catalyzes the 6-electron reduction of sulfite to sulfide. This is one of several activities required for the biosynthesis of L-cysteine from sulfate. In Bacillus velezensis (strain DSM 23117 / BGSC 10A6 / LMG 26770 / FZB42) (Bacillus amyloliquefaciens subsp. plantarum), this protein is Sulfite reductase [NADPH] hemoprotein beta-component.